A 344-amino-acid polypeptide reads, in one-letter code: Acyl-CoA ligase clz12 (344 aa).

AMP-binding stretches follow at residues 2–239 (VQRS…IIKV) and 248–322 (ELET…PSGK).

Belongs to the ATP-dependent AMP-binding enzyme family.

It participates in secondary metabolite biosynthesis. Its function is as follows. Acyl-CoA ligase; part of the gene cluster that mediates the biosynthesis of squalestatin S1 (SQS1, also known as zaragozic acid A), a heavily oxidized fungal polyketide that offers potent cholesterol lowering activity by targeting squalene synthase (SS). SQS1 is composed of a 2,8-dioxobicyclic[3.2.1]octane-3,4,5-tricarboxyclic acid core that is connected to two lipophilic polyketide arms. These initial steps feature the priming of an unusual benzoic acid starter unit onto the highly reducing polyketide synthase clz14, followed by oxaloacetate extension and product release to generate a tricarboxylic acid containing product. The phenylalanine ammonia lyase (PAL) clz10 and the acyl-CoA ligase clz12 are involved in transforming phenylalanine into benzoyl-CoA. The citrate synthase-like protein clz17 is involved in connecting the C-alpha-carbons of the hexaketide chain and oxaloacetate to afford the tricarboxylic acid unit. The potential hydrolytic enzymes, clz11 and clz13, are in close proximity to pks2 and may participate in product release. On the other side, the tetraketide arm is synthesized by a the squalestatin tetraketide synthase clz2 and enzymatically esterified to the core in the last biosynthetic step, by the acetyltransferase clz6. The biosynthesis of the tetraketide must involve 3 rounds of chain extension. After the first and second rounds methyl-transfer occurs, and in all rounds of extension the ketoreductase and dehydratase are active. The enoyl reductase and C-MeT of clz2 are not active in the final round of extension. The acetyltransferase clz6 appears to have a broad substrate selectivity for its acyl CoA substrate, allowing the in vitro synthesis of novel squalestatins. The biosynthesis of SQS1 requires several oxidative steps likely performed by oxidoreductases clz3, clz15 and clz16. Finally, in support of the identification of the cluster as being responsible for SQS1 production, the cluster contains a gene encoding a putative squalene synthase (SS) clz20, suggesting a likely mechanism for self-resistance. The protein is Acyl-CoA ligase clz12 of Cochliobolus lunatus (Filamentous fungus).